Consider the following 422-residue polypeptide: NADP-dependent malic enzyme (422 aa).

Tyr39 acts as the Proton donor in catalysis. Catalysis depends on Lys94, which acts as the Proton acceptor. Substrate is bound at residue Lys94. Residues Glu136, Asp137, and Asp162 each contribute to the a divalent metal cation site. Residues 195-198, Asn286, and Asn318 contribute to the NADP(+) site; that span reads AGAA. A substrate-binding site is contributed by Asn318.

It belongs to the malic enzymes family. The cofactor is Mg(2+). Mn(2+) serves as cofactor.

The catalysed reaction is (S)-malate + NADP(+) = pyruvate + CO2 + NADPH. It catalyses the reaction oxaloacetate + H(+) = pyruvate + CO2. In Halomonas elongata (strain ATCC 33173 / DSM 2581 / NBRC 15536 / NCIMB 2198 / 1H9), this protein is NADP-dependent malic enzyme.